We begin with the raw amino-acid sequence, 351 residues long: Anthranilate phosphoribosyltransferase (351 aa).

5-phospho-alpha-D-ribose 1-diphosphate-binding positions include Gly80, 83–84 (GD), Thr88, 90–93 (NIST), 108–116 (KHGNRSITS), and Ser120. Gly80 lines the anthranilate pocket. A Mg(2+)-binding site is contributed by Ser92. Anthranilate is bound at residue Asn111. Arg166 serves as a coordination point for anthranilate. Mg(2+)-binding residues include Asp229 and Glu230.

The protein belongs to the anthranilate phosphoribosyltransferase family. Homodimer. It depends on Mg(2+) as a cofactor.

It carries out the reaction N-(5-phospho-beta-D-ribosyl)anthranilate + diphosphate = 5-phospho-alpha-D-ribose 1-diphosphate + anthranilate. Its pathway is amino-acid biosynthesis; L-tryptophan biosynthesis; L-tryptophan from chorismate: step 2/5. In terms of biological role, catalyzes the transfer of the phosphoribosyl group of 5-phosphorylribose-1-pyrophosphate (PRPP) to anthranilate to yield N-(5'-phosphoribosyl)-anthranilate (PRA). This is Anthranilate phosphoribosyltransferase from Chlorobaculum tepidum (strain ATCC 49652 / DSM 12025 / NBRC 103806 / TLS) (Chlorobium tepidum).